A 320-amino-acid chain; its full sequence is Cytochrome f (320 aa).

Residues 1–35 form the signal peptide; the sequence is MQTRNAFSWIKKEITRSISVLLMIYIITRAPISNA. Heme contacts are provided by Y36, C56, C59, and H60. A helical membrane pass occupies residues 286 to 305; the sequence is VQGLLLFLASIILAQIFLVL.

It belongs to the cytochrome f family. The 4 large subunits of the cytochrome b6-f complex are cytochrome b6, subunit IV (17 kDa polypeptide, petD), cytochrome f and the Rieske protein, while the 4 small subunits are PetG, PetL, PetM and PetN. The complex functions as a dimer. Heme serves as cofactor.

Its subcellular location is the plastid. The protein localises to the chloroplast thylakoid membrane. Its function is as follows. Component of the cytochrome b6-f complex, which mediates electron transfer between photosystem II (PSII) and photosystem I (PSI), cyclic electron flow around PSI, and state transitions. This chain is Cytochrome f (petA), found in Vicia faba (Broad bean).